The chain runs to 434 residues: Citrate synthase (434 aa).

Residues histidine 310 and aspartate 368 contribute to the active site.

The protein belongs to the citrate synthase family.

The catalysed reaction is oxaloacetate + acetyl-CoA + H2O = citrate + CoA + H(+). It functions in the pathway carbohydrate metabolism; tricarboxylic acid cycle; isocitrate from oxaloacetate: step 1/2. This is Citrate synthase (gltA) from Bradyrhizobium diazoefficiens (strain JCM 10833 / BCRC 13528 / IAM 13628 / NBRC 14792 / USDA 110).